The chain runs to 179 residues: Large ribosomal subunit protein uL6 (179 aa).

This sequence belongs to the universal ribosomal protein uL6 family. In terms of assembly, part of the 50S ribosomal subunit.

Functionally, this protein binds to the 23S rRNA, and is important in its secondary structure. It is located near the subunit interface in the base of the L7/L12 stalk, and near the tRNA binding site of the peptidyltransferase center. This is Large ribosomal subunit protein uL6 from Spiroplasma kunkelii.